Reading from the N-terminus, the 278-residue chain is Undecaprenyl-diphosphatase (278 aa).

The next 8 helical transmembrane spans lie at 14 to 34 (GTTE…PWLF), 40 to 60 (GLAF…AYFW), 89 to 109 (WAVI…NDVI), 121 to 141 (TAIV…WLAE), 153 to 173 (LGLR…LPGV), 196 to 216 (FSFI…TLKL), 227 to 247 (VLFV…IAFL), and 257 to 277 (SIFI…VSFA).

The protein belongs to the UppP family.

It is found in the cell membrane. The enzyme catalyses di-trans,octa-cis-undecaprenyl diphosphate + H2O = di-trans,octa-cis-undecaprenyl phosphate + phosphate + H(+). Functionally, catalyzes the dephosphorylation of undecaprenyl diphosphate (UPP). Confers resistance to bacitracin. In Thermomicrobium roseum (strain ATCC 27502 / DSM 5159 / P-2), this protein is Undecaprenyl-diphosphatase.